A 142-amino-acid polypeptide reads, in one-letter code: ATP synthase epsilon chain (142 aa).

This sequence belongs to the ATPase epsilon chain family. In terms of assembly, F-type ATPases have 2 components, CF(1) - the catalytic core - and CF(0) - the membrane proton channel. CF(1) has five subunits: alpha(3), beta(3), gamma(1), delta(1), epsilon(1). CF(0) has three main subunits: a, b and c.

It is found in the cell inner membrane. Produces ATP from ADP in the presence of a proton gradient across the membrane. The sequence is that of ATP synthase epsilon chain from Actinobacillus succinogenes (strain ATCC 55618 / DSM 22257 / CCUG 43843 / 130Z).